The sequence spans 538 residues: MRHVQAELSPSSEPEAGPSQPPVRQGTLQGGLLMGYSPAGGATSPGVYQVSIFSPSAGASEPPRALKRPAPPTEGPRELKRGPGLGAREGLPPEEPSTVGLLSPEGLGLGLGVASQHFSHHGLCVVEHGGNTTSPWTSGTQSTPWLSSNASFNTLHTRDWAFPDQGGQGCLGETPGPAPSGQLHTLDTDLHNLAQIGGKSPVARVGNGSNPWPRESHGTANGHSPEHTPPGPGPPGPCPTKRRLLPAGETLDVSSEDEGPAPRRRRGTLGCPLAANSSDAKATPFWSHLLPGPKEPVLDPTDCSPMGRRLKGARRLKLSSLRTLRKGPGLLSPPSASPFPTPAVSRTLLGNFEESLLRGRFAPSGHIEGFTAEIGASGSYCPQHVTLPVTVTFFDVSEQNAPAPFLGVVDLTPLGRKGYSVPKVGTIQVTLFNPNQTVVKMFLVTFDFSDMPAAHMTFLRHRLFLVPVGEEGNASPTHRLLCYLLHLRFRSSRSGRLSLHGDIRLLFSRRSLELDTGLPYELQAVTEAPHNPRYSPLP.

Disordered stretches follow at residues 1 to 99, 165 to 185, and 199 to 270; these read MRHV…PSTV, QGGQGCLGETPGPAPSGQLHT, and KSPV…GTLG. Pro residues predominate over residues 227 to 238; sequence HTPPGPGPPGPC. Phosphoserine occurs at positions 254 and 255. The segment at 348 to 430 is required for macropage invasion; sequence LLGNFEESLL…VPKVGTIQVT (83 aa). The interval 436 to 444 is transactivation domain 1 (TAD1); that stretch reads QTVVKMFLV.

Belongs to the ATOS family.

The protein resides in the nucleus. In terms of biological role, transcription regulator that syncronizes transcriptional and translational programs to promote macrophage invasion of tissues. This Mus musculus (Mouse) protein is Atos homolog protein B.